The primary structure comprises 308 residues: UPF0282 protein SSO3251 (308 aa).

This sequence belongs to the UPF0282 family.

The polypeptide is UPF0282 protein SSO3251 (Saccharolobus solfataricus (strain ATCC 35092 / DSM 1617 / JCM 11322 / P2) (Sulfolobus solfataricus)).